The following is a 343-amino-acid chain: Protein RecA (343 aa).

ATP is bound at residue 64-71; sequence GPESSGKT.

The protein belongs to the RecA family.

Its subcellular location is the cytoplasm. Its function is as follows. Can catalyze the hydrolysis of ATP in the presence of single-stranded DNA, the ATP-dependent uptake of single-stranded DNA by duplex DNA, and the ATP-dependent hybridization of homologous single-stranded DNAs. It interacts with LexA causing its activation and leading to its autocatalytic cleavage. In Bacillus cereus (strain ATCC 14579 / DSM 31 / CCUG 7414 / JCM 2152 / NBRC 15305 / NCIMB 9373 / NCTC 2599 / NRRL B-3711), this protein is Protein RecA.